Reading from the N-terminus, the 360-residue chain is Cyclin-dependent kinase 7 (360 aa).

A Protein kinase domain is found at Tyr-4 to Phe-288. Residues Ile-10–Val-18 and Lys-33 contribute to the ATP site. The Proton acceptor role is filled by Asp-130. Ser-157 and Ser-163 each carry phosphoserine. The segment covering Gln-333–Gln-342 has biased composition (low complexity). Positions Gln-333–Val-360 are disordered. Residues Asn-350–Val-360 show a composition bias toward polar residues.

The protein belongs to the protein kinase superfamily. CMGC Ser/Thr protein kinase family. CDC2/CDKX subfamily. In terms of assembly, probably associates with cyclin H and mat1 to form a multimeric active enzyme.

It is found in the nucleus. The catalysed reaction is L-seryl-[protein] + ATP = O-phospho-L-seryl-[protein] + ADP + H(+). It catalyses the reaction L-threonyl-[protein] + ATP = O-phospho-L-threonyl-[protein] + ADP + H(+). The enzyme catalyses [DNA-directed RNA polymerase] + ATP = phospho-[DNA-directed RNA polymerase] + ADP + H(+). Functionally, catalytic part of CAK which activates cyclin-associated CDK1/CDK2/CDK4 by threonine phosphorylation, thereby allowing MPF activation. This chain is Cyclin-dependent kinase 7 (cdk7), found in Dictyostelium discoideum (Social amoeba).